The following is a 358-amino-acid chain: Fructose-bisphosphate aldolase 2, cytoplasmic (358 aa).

Arginine 39 serves as a coordination point for substrate. The active-site Proton acceptor is glutamate 183. Residue lysine 225 is the Schiff-base intermediate with dihydroxyacetone-P of the active site. Substrate-binding positions include 266-268 and arginine 298; that span reads SGG.

Belongs to the class I fructose-bisphosphate aldolase family. As to quaternary structure, homotetramer.

The protein resides in the cytoplasm. The protein localises to the cytosol. It catalyses the reaction beta-D-fructose 1,6-bisphosphate = D-glyceraldehyde 3-phosphate + dihydroxyacetone phosphate. Its pathway is carbohydrate degradation; glycolysis; D-glyceraldehyde 3-phosphate and glycerone phosphate from D-glucose: step 4/4. In terms of biological role, fructose-bisphosphate aldolase that plays a key role in glycolysis and gluconeogenesis. This Oryza sativa subsp. japonica (Rice) protein is Fructose-bisphosphate aldolase 2, cytoplasmic.